We begin with the raw amino-acid sequence, 187 residues long: Large ribosomal subunit protein bL9 (187 aa).

The disordered stretch occupies residues 168 to 187 (EEAPAEEDVAAEETSEAAEA).

Belongs to the bacterial ribosomal protein bL9 family.

Functionally, binds to the 23S rRNA. The sequence is that of Large ribosomal subunit protein bL9 from Paramagnetospirillum magneticum (strain ATCC 700264 / AMB-1) (Magnetospirillum magneticum).